We begin with the raw amino-acid sequence, 159 residues long: SsrA-binding protein (159 aa).

Belongs to the SmpB family.

Its subcellular location is the cytoplasm. Functionally, required for rescue of stalled ribosomes mediated by trans-translation. Binds to transfer-messenger RNA (tmRNA), required for stable association of tmRNA with ribosomes. tmRNA and SmpB together mimic tRNA shape, replacing the anticodon stem-loop with SmpB. tmRNA is encoded by the ssrA gene; the 2 termini fold to resemble tRNA(Ala) and it encodes a 'tag peptide', a short internal open reading frame. During trans-translation Ala-aminoacylated tmRNA acts like a tRNA, entering the A-site of stalled ribosomes, displacing the stalled mRNA. The ribosome then switches to translate the ORF on the tmRNA; the nascent peptide is terminated with the 'tag peptide' encoded by the tmRNA and targeted for degradation. The ribosome is freed to recommence translation, which seems to be the essential function of trans-translation. The protein is SsrA-binding protein of Mycobacteroides abscessus (strain ATCC 19977 / DSM 44196 / CCUG 20993 / CIP 104536 / JCM 13569 / NCTC 13031 / TMC 1543 / L948) (Mycobacterium abscessus).